The following is a 763-amino-acid chain: Ribonucleoside-diphosphate reductase subunit alpha (763 aa).

Residues 5-95 form the ATP-cone domain; that stretch reads LFVTKRNGKK…IFHLRKKAYG (91 aa). Residues Lys-9, 15–21, Thr-55, and Lys-91 contribute to the ATP site; that span reads EKINLDK. A GDP-binding site is contributed by Thr-209. Cys-225 and Cys-462 form a disulfide bridge. Residues 232 to 234, Arg-262, and Arg-269 contribute to the dTTP site; that span reads DNL. Asn-437 is a GDP binding site. The Proton acceptor role is filled by Asn-437. Catalysis depends on Cys-439, which acts as the Cysteine radical intermediate. Residues Glu-441 and 623 to 625 contribute to the GDP site; that span reads ETS. Glu-441 (proton acceptor) is an active-site residue.

The protein belongs to the ribonucleoside diphosphate reductase large chain family. Tetramer of two alpha and two beta subunits.

The catalysed reaction is a 2'-deoxyribonucleoside 5'-diphosphate + [thioredoxin]-disulfide + H2O = a ribonucleoside 5'-diphosphate + [thioredoxin]-dithiol. With respect to regulation, under complex allosteric control mediated by deoxynucleoside triphosphates and ATP binding to separate specificity and activation sites on the alpha subunit. The type of nucleotide bound at the specificity site determines substrate preference. It seems probable that ATP makes the enzyme reduce CDP and UDP, dGTP favors ADP reduction and dTTP favors GDP reduction. Stimulated by ATP and inhibited by dATP binding to the activity site. Functionally, provides the precursors necessary for DNA synthesis. Catalyzes the biosynthesis of deoxyribonucleotides from the corresponding ribonucleotides. This chain is Ribonucleoside-diphosphate reductase subunit alpha (nrdA), found in Buchnera aphidicola subsp. Schizaphis graminum (strain Sg).